Here is a 326-residue protein sequence, read N- to C-terminus: Nicotianamine synthase 2 (326 aa).

It belongs to the nicotianamine synthase (NAS)-like family. Expressed in roots.

It carries out the reaction 3 S-adenosyl-L-methionine = nicotianamine + 3 S-methyl-5'-thioadenosine + 3 H(+). In terms of biological role, synthesizes nicotianamine, a polyamine that is the first intermediate in the synthesis of the phytosiderophores of the mugineic acid type found in gramineae which serve as a sensor for the physiological iron status within the plant, and/or might be involved in the transport of iron. The chain is Nicotianamine synthase 2 (NAS2) from Oryza sativa subsp. japonica (Rice).